The following is a 289-amino-acid chain: Protease HtpX homolog (289 aa).

A run of 2 helical transmembrane segments spans residues 5–27 (LWVR…GYLI) and 40–60 (ALFM…SWYN). His-133 provides a ligand contact to Zn(2+). Glu-134 is an active-site residue. His-137 is a binding site for Zn(2+). Helical transmembrane passes span 143–163 (TLIQ…VNFA) and 181–201 (IVAL…IQLA). Glu-207 contributes to the Zn(2+) binding site.

It belongs to the peptidase M48B family. Requires Zn(2+) as cofactor.

The protein resides in the cell membrane. The chain is Protease HtpX homolog from Pyrococcus furiosus (strain ATCC 43587 / DSM 3638 / JCM 8422 / Vc1).